The sequence spans 343 residues: Small ribosomal subunit biogenesis GTPase RsgA (343 aa).

In terms of domain architecture, CP-type G spans 116 to 275; that stretch reads RGQLKPVAAN…LIDSPGIREF (160 aa). GTP contacts are provided by residues 163 to 166 and 217 to 225; these read NKAD and GQSGVGKSS. Zn(2+) is bound by residues cysteine 299, cysteine 304, histidine 306, and cysteine 312.

Belongs to the TRAFAC class YlqF/YawG GTPase family. RsgA subfamily. As to quaternary structure, monomer. Associates with 30S ribosomal subunit, binds 16S rRNA. Zn(2+) serves as cofactor.

The protein resides in the cytoplasm. One of several proteins that assist in the late maturation steps of the functional core of the 30S ribosomal subunit. Helps release RbfA from mature subunits. May play a role in the assembly of ribosomal proteins into the subunit. Circularly permuted GTPase that catalyzes slow GTP hydrolysis, GTPase activity is stimulated by the 30S ribosomal subunit. The polypeptide is Small ribosomal subunit biogenesis GTPase RsgA (Azotobacter vinelandii (strain DJ / ATCC BAA-1303)).